The sequence spans 447 residues: Phosphatidylinositol 4-kinase type 2-alpha (447 aa).

The segment at Met1–Glu77 is disordered. Over residues Arg48–Glu77 the composition is skewed to basic and acidic residues. Positions Gly92–Thr421 constitute a PI3K/PI4K catalytic domain. The segment at Ile98–Gly104 is G-loop. ATP is bound by residues Tyr99–Ser105 and Lys120. Residues Glu125–Tyr127 form an important for substrate binding region. Positions Lys133–Cys146 are important for interaction with membranes. S-palmitoyl cysteine attachment occurs at residues Cys142, Cys143, Cys145, and Cys146. Position 229–232 (Gln229–Val232) interacts with ATP. The important for interaction with membranes stretch occupies residues Lys236–Arg244. The segment at Arg273 to Asn281 is catalytic loop. Positions Ala312 to Phe332 are activation loop. Asp314 serves as a coordination point for ATP. Residues Trp327–Trp336 form an important for interaction with membranes region.

It belongs to the PI3/PI4-kinase family. Type II PI4K subfamily.

It localises to the golgi apparatus. The protein resides in the trans-Golgi network membrane. Its subcellular location is the membrane raft. The protein localises to the endosome. It is found in the cytoplasmic vesicle. It localises to the cell projection. The protein resides in the dendrite. Its subcellular location is the presynaptic cell membrane. The protein localises to the synapse. It is found in the synaptosome. It localises to the mitochondrion. The protein resides in the membrane. Its subcellular location is the cell membrane. The protein localises to the perikaryon. It is found in the neuron projection. It carries out the reaction a 1,2-diacyl-sn-glycero-3-phospho-(1D-myo-inositol) + ATP = a 1,2-diacyl-sn-glycero-3-phospho-(1D-myo-inositol 4-phosphate) + ADP + H(+). Membrane-bound phosphatidylinositol-4 kinase (PI4-kinase) that catalyzes the phosphorylation of phosphatidylinositol (PI) to phosphatidylinositol 4-phosphate (PI4P), a lipid that plays important roles in endocytosis, Golgi function, protein sorting and membrane trafficking. Besides, phosphorylation of phosphatidylinositol (PI) to phosphatidylinositol 4-phosphate (PI4P) is the first committed step in the generation of phosphatidylinositol 4,5-bisphosphate (PIP2), a precursor of the second messenger inositol 1,4,5-trisphosphate (InsP3). The chain is Phosphatidylinositol 4-kinase type 2-alpha (pi4k2a) from Danio rerio (Zebrafish).